A 600-amino-acid polypeptide reads, in one-letter code: Glutamine--fructose-6-phosphate aminotransferase [isomerizing] (600 aa).

Catalysis depends on Cys2, which acts as the Nucleophile; for GATase activity. Residues 2–217 form the Glutamine amidotransferase type-2 domain; the sequence is CGIVGYIGQN…DKEIVLVSRN (216 aa). SIS domains are found at residues 283 to 422 and 452 to 590; these read IRTA…VKGL and LARD…VDKP. Lys595 (for Fru-6P isomerization activity) is an active-site residue.

Homodimer.

It is found in the cytoplasm. The catalysed reaction is D-fructose 6-phosphate + L-glutamine = D-glucosamine 6-phosphate + L-glutamate. Functionally, catalyzes the first step in hexosamine metabolism, converting fructose-6P into glucosamine-6P using glutamine as a nitrogen source. This Oceanobacillus iheyensis (strain DSM 14371 / CIP 107618 / JCM 11309 / KCTC 3954 / HTE831) protein is Glutamine--fructose-6-phosphate aminotransferase [isomerizing].